Consider the following 307-residue polypeptide: Ribosomal RNA small subunit methyltransferase H (307 aa).

S-adenosyl-L-methionine-binding positions include 33 to 35 (GGY), Asp-51, Phe-82, Asp-96, and Gln-103.

This sequence belongs to the methyltransferase superfamily. RsmH family.

The protein resides in the cytoplasm. It catalyses the reaction cytidine(1402) in 16S rRNA + S-adenosyl-L-methionine = N(4)-methylcytidine(1402) in 16S rRNA + S-adenosyl-L-homocysteine + H(+). In terms of biological role, specifically methylates the N4 position of cytidine in position 1402 (C1402) of 16S rRNA. This chain is Ribosomal RNA small subunit methyltransferase H, found in Rickettsia peacockii (strain Rustic).